Consider the following 341-residue polypeptide: tRNA N6-adenosine threonylcarbamoyltransferase (341 aa).

H117 and H121 together coordinate Fe cation. Substrate contacts are provided by residues 139–143 (VVSGG), D172, G185, D189, and N278. D307 provides a ligand contact to Fe cation.

The protein belongs to the KAE1 / TsaD family. Requires Fe(2+) as cofactor.

The protein resides in the cytoplasm. The enzyme catalyses L-threonylcarbamoyladenylate + adenosine(37) in tRNA = N(6)-L-threonylcarbamoyladenosine(37) in tRNA + AMP + H(+). In terms of biological role, required for the formation of a threonylcarbamoyl group on adenosine at position 37 (t(6)A37) in tRNAs that read codons beginning with adenine. Is involved in the transfer of the threonylcarbamoyl moiety of threonylcarbamoyl-AMP (TC-AMP) to the N6 group of A37, together with TsaE and TsaB. TsaD likely plays a direct catalytic role in this reaction. This is tRNA N6-adenosine threonylcarbamoyltransferase from Bacillus licheniformis (strain ATCC 14580 / DSM 13 / JCM 2505 / CCUG 7422 / NBRC 12200 / NCIMB 9375 / NCTC 10341 / NRRL NRS-1264 / Gibson 46).